A 554-amino-acid polypeptide reads, in one-letter code: Putative F-box/LRR-repeat protein 8 (554 aa).

An F-box domain is found at 71-117 (YDYISNLPDECLSLIFQSLTCADLKRCSLVCRRWLTIEGQCRHRLSL). LRR repeat units lie at residues 119–144 (AQSDLISVIPSLFTRFDSVTKLVLRS), 148–173 (SLGICDNAFVMISVRCRNLTRLKLRG), 174–199 (CPEISDLGIIGFTENCRSLKKVSFGS), 205–224 (KGMNALLNTCLGLEELSVKR), 250–275 (KELHNGQCFAPLLSGAKGLRILKIFR), 301–325 (RIQMSDLGLTALSKCSGVEVLHLVK), 326–351 (TPDCTNVGLALVAERCKLLRKLHIDG), 354–379 (TNRIGDEGLIVVAKYCWNLQELVLIG), 383–404 (TKLSLEAIVSNCLNLERLALCG), 405–428 (SDTVGDTELCCIAEKCLALRKLCI), 430–455 (NCPITDDGIKALGNGCPNLLKVKVKK), and 456–480 (CRGVTTQGADLLRKRRALLVVNLDA).

The chain is Putative F-box/LRR-repeat protein 8 (FBL8) from Arabidopsis thaliana (Mouse-ear cress).